A 372-amino-acid chain; its full sequence is Partitioning defective 6 homolog beta (372 aa).

Phosphoserine is present on Ser-11. The region spanning 16-96 is the PB1 domain; sequence TMEVKSKFGA…PLLRIFIQKK (81 aa). The interval 126 to 253 is interaction with PARD3 and CDC42; that stretch reads RKKPHIVISM…ITVRPANQRN (128 aa). The region spanning 133 to 150 is the Pseudo-CRIB domain; sequence ISMPQDFRPVSSIIDVDI. Residues 157-250 enclose the PDZ domain; it reads RVRLYKYGTE…NLIITVRPAN (94 aa). Positions 253–272 are enriched in polar residues; it reads NNVVRNSRTSGSSGQSTDNS. Residues 253 to 292 form a disordered region; sequence NNVVRNSRTSGSSGQSTDNSLLGYPQQIEPSFEPEDEDSE.

Belongs to the PAR6 family. In terms of assembly, interacts with PARD3. Interacts with GTP-bound forms of CDC42 and RAC1. Interacts with GTP-bound RHOQ/TC10. Interacts with PALS1. Interacts with the N-terminal part of PRKCI and PRKCZ. Part of a complex with PARD3, CDC42 or RAC1 and PRKCI or PRKCZ. Part of a complex with LLGL1 and PRKCI. Interacts with PARD3B. Interacts with ECT2. As to expression, expressed in pancreas and in both adult and fetal kidney. Weakly expressed in placenta and lung. Not expressed in other tissues.

The protein localises to the cytoplasm. The protein resides in the cell membrane. Its subcellular location is the cell junction. It localises to the tight junction. In terms of biological role, adapter protein involved in asymmetrical cell division and cell polarization processes. Probably involved in formation of epithelial tight junctions. Association with PARD3 may prevent the interaction of PARD3 with F11R/JAM1, thereby preventing tight junction assembly. The PARD6-PARD3 complex links GTP-bound Rho small GTPases to atypical protein kinase C proteins. The polypeptide is Partitioning defective 6 homolog beta (PARD6B) (Homo sapiens (Human)).